The chain runs to 577 residues: Arginine--tRNA ligase (577 aa).

A 'HIGH' region motif is present at residues Pro122 to His132.

Belongs to the class-I aminoacyl-tRNA synthetase family. As to quaternary structure, monomer.

The protein localises to the cytoplasm. It carries out the reaction tRNA(Arg) + L-arginine + ATP = L-arginyl-tRNA(Arg) + AMP + diphosphate. In Edwardsiella ictaluri (strain 93-146), this protein is Arginine--tRNA ligase.